We begin with the raw amino-acid sequence, 190 residues long: Protein GrpE (190 aa).

The span at Met1–Lys10 shows a compositional bias: basic and acidic residues. The disordered stretch occupies residues Met1 to Gln42. Residues Ser12–Ala30 are compositionally biased toward low complexity. Over residues Pro32–Gln42 the composition is skewed to basic and acidic residues.

Belongs to the GrpE family. Homodimer.

The protein localises to the cytoplasm. Functionally, participates actively in the response to hyperosmotic and heat shock by preventing the aggregation of stress-denatured proteins, in association with DnaK and GrpE. It is the nucleotide exchange factor for DnaK and may function as a thermosensor. Unfolded proteins bind initially to DnaJ; upon interaction with the DnaJ-bound protein, DnaK hydrolyzes its bound ATP, resulting in the formation of a stable complex. GrpE releases ADP from DnaK; ATP binding to DnaK triggers the release of the substrate protein, thus completing the reaction cycle. Several rounds of ATP-dependent interactions between DnaJ, DnaK and GrpE are required for fully efficient folding. The protein is Protein GrpE of Pelobacter propionicus (strain DSM 2379 / NBRC 103807 / OttBd1).